The chain runs to 287 residues: ADP-dependent (S)-NAD(P)H-hydrate dehydratase (287 aa).

A YjeF C-terminal domain is found at 7-283; the sequence is TTALVKKFIP…PEISTVMKPF (277 aa). A42 and H159 together coordinate (6S)-NADPHX. AMP contacts are provided by residues 196–200 and G224; that span reads KGSTD. D225 is a (6S)-NADPHX binding site.

This sequence belongs to the NnrD/CARKD family. As to quaternary structure, homotetramer. The cofactor is Mg(2+).

The catalysed reaction is (6S)-NADHX + ADP = AMP + phosphate + NADH + H(+). It catalyses the reaction (6S)-NADPHX + ADP = AMP + phosphate + NADPH + H(+). Catalyzes the dehydration of the S-form of NAD(P)HX at the expense of ADP, which is converted to AMP. Together with NAD(P)HX epimerase, which catalyzes the epimerization of the S- and R-forms, the enzyme allows the repair of both epimers of NAD(P)HX, a damaged form of NAD(P)H that is a result of enzymatic or heat-dependent hydration. This chain is ADP-dependent (S)-NAD(P)H-hydrate dehydratase, found in Nitrosopumilus maritimus (strain SCM1).